An 874-amino-acid polypeptide reads, in one-letter code: Leucine--tRNA ligase (874 aa).

Residues 47–57 (PYPSGKLHMGH) carry the 'HIGH' region motif. Positions 636–640 (KMSKS) match the 'KMSKS' region motif. Lys639 provides a ligand contact to ATP.

It belongs to the class-I aminoacyl-tRNA synthetase family.

Its subcellular location is the cytoplasm. The catalysed reaction is tRNA(Leu) + L-leucine + ATP = L-leucyl-tRNA(Leu) + AMP + diphosphate. This is Leucine--tRNA ligase from Acinetobacter baumannii (strain AB0057).